Reading from the N-terminus, the 328-residue chain is Cell division protein ZipA (328 aa).

Residues 1–4 lie on the Periplasmic side of the membrane; sequence MDLN. A helical transmembrane segment spans residues 5–25; it reads TILIIVGIVALVALIVHGLWS. The Cytoplasmic portion of the chain corresponds to 26–328; that stretch reads NRREKSKYFD…NAEQAYLARV (303 aa). Residues 44 to 82 are disordered; sequence SLTSRSHTQEEMVQPNNISPNTYVENGHTPIPQPTTEKL. Positions 57–67 are enriched in polar residues; sequence QPNNISPNTYV.

The protein belongs to the ZipA family. In terms of assembly, interacts with FtsZ via their C-terminal domains.

Its subcellular location is the cell inner membrane. Its function is as follows. Essential cell division protein that stabilizes the FtsZ protofilaments by cross-linking them and that serves as a cytoplasmic membrane anchor for the Z ring. Also required for the recruitment to the septal ring of downstream cell division proteins. The protein is Cell division protein ZipA of Haemophilus influenzae (strain ATCC 51907 / DSM 11121 / KW20 / Rd).